The sequence spans 357 residues: Transcription factor PCF6 (357 aa).

The disordered stretch occupies residues 1–29 (MEAAVGDGEGGGGGGGRGKRGRGGGGGEM). The span at 7-16 (DGEGGGGGGG) shows a compositional bias: gly residues. Positions 52 to 110 (GKDRHSKVYTAKGIRDRRVRLSVATAIQFYDLQDRLGFDQPSKAIEWLINAASPAIDTL) constitute a TCP domain. Disordered regions lie at residues 125–162 (AADA…DKEV) and 281–307 (ANRG…QQLQ). Composition is skewed to polar residues over residues 142 to 155 (LSNK…SETS) and 284 to 295 (GTLQSNSPSNMS).

As to quaternary structure, forms homodimers and heterodimers.

It localises to the nucleus. In terms of biological role, transcription activator. Binds the promoter core sequence 5'-GGNCC-3'. This Oryza sativa subsp. japonica (Rice) protein is Transcription factor PCF6 (PCF6).